Here is a 128-residue protein sequence, read N- to C-terminus: Large ribosomal subunit protein bL17 (128 aa).

It belongs to the bacterial ribosomal protein bL17 family. Part of the 50S ribosomal subunit. Contacts protein L32.

This Streptococcus pneumoniae serotype 4 (strain ATCC BAA-334 / TIGR4) protein is Large ribosomal subunit protein bL17.